Here is a 506-residue protein sequence, read N- to C-terminus: Maturase K (506 aa).

Belongs to the intron maturase 2 family. MatK subfamily.

The protein localises to the plastid. The protein resides in the chloroplast. Functionally, usually encoded in the trnK tRNA gene intron. Probably assists in splicing its own and other chloroplast group II introns. The polypeptide is Maturase K (Angiopteris evecta (Mule's foot fern)).